The chain runs to 110 residues: uncharacterized protein (110 aa).

Positions 1–20 are enriched in polar residues; that stretch reads MNQQNQKISNPQTPVPTTSE. The disordered stretch occupies residues 1–24; that stretch reads MNQQNQKISNPQTPVPTTSEMNDR.

This is an uncharacterized protein from Bacillus subtilis (strain 168).